We begin with the raw amino-acid sequence, 61 residues long: Small ribosomal subunit protein uS14 (61 aa).

Positions 24, 27, 40, and 43 each coordinate Zn(2+).

This sequence belongs to the universal ribosomal protein uS14 family. Zinc-binding uS14 subfamily. As to quaternary structure, part of the 30S ribosomal subunit. Contacts proteins S3 and S10. The cofactor is Zn(2+).

Its function is as follows. Binds 16S rRNA, required for the assembly of 30S particles and may also be responsible for determining the conformation of the 16S rRNA at the A site. This chain is Small ribosomal subunit protein uS14, found in Helicobacter pylori (strain J99 / ATCC 700824) (Campylobacter pylori J99).